The following is a 465-amino-acid chain: MLWTDCLTRLRQELSDNVFAMWIRPLVAEEVEGILRLYAPNPYWTRYIQENHLELISILAEQLSEGRVRQVEILVDSRPGSILSSSEQPATTTAALQTAPIPQPAKVKREPEPVANTAVSSKSSKKKLLNPQFTFSLFVEGRSNQMAAETCRKVLTQLGASQHNPLFLYGPTGLGKTHLMQAVGNALLQAKPNARVMYMTSESFVQDFVSSLQKGKVEEFKKNCRSLDLLLVDDIHLLAGKEASLVEFFYTFNALLDESKQIILTSDRYPKELTELDPRLVSRFSWGLSVGVEPPDIETRIEILLKKAENSGVDLPRNCALFIAQQVVANVRELEGALNKVVAISRFKGAPIDLDVVRESLKDVLAIRARTISVENIQRVVSEYFRIPLKELIGPKRTRIYARPRQLAMGLARELTGDSFPEIGMAFGGRDHSTVMHACEKVVSLREEDPIFDEDYKNLLRLLQS.

Residues methionine 1–glutamate 87 form a domain I, interacts with DnaA modulators region. The interval serine 81–serine 123 is disordered. Positions glutamine 88–proline 100 are enriched in low complexity. Residues glutamine 88 to lysine 127 form a domain II region. The tract at residues leucine 128 to serine 345 is domain III, AAA+ region. ATP contacts are provided by glycine 173, glycine 175, lysine 176, and threonine 177. A domain IV, binds dsDNA region spans residues arginine 346–serine 465.

It belongs to the DnaA family. In terms of assembly, oligomerizes as a right-handed, spiral filament on DNA at oriC.

The protein resides in the cytoplasm. Functionally, plays an essential role in the initiation and regulation of chromosomal replication. ATP-DnaA binds to the origin of replication (oriC) to initiate formation of the DNA replication initiation complex once per cell cycle. Binds the DnaA box (a 9 base pair repeat at the origin) and separates the double-stranded (ds)DNA. Forms a right-handed helical filament on oriC DNA; dsDNA binds to the exterior of the filament while single-stranded (ss)DNA is stabiized in the filament's interior. The ATP-DnaA-oriC complex binds and stabilizes one strand of the AT-rich DNA unwinding element (DUE), permitting loading of DNA polymerase. After initiation quickly degrades to an ADP-DnaA complex that is not apt for DNA replication. Binds acidic phospholipids. This chain is Chromosomal replication initiator protein DnaA, found in Acinetobacter baumannii (strain ATCC 17978 / DSM 105126 / CIP 53.77 / LMG 1025 / NCDC KC755 / 5377).